A 93-amino-acid polypeptide reads, in one-letter code: Large ribosomal subunit protein bL31B (93 aa).

Belongs to the bacterial ribosomal protein bL31 family. Type B subfamily. As to quaternary structure, part of the 50S ribosomal subunit.

The protein is Large ribosomal subunit protein bL31B of Psychrobacter arcticus (strain DSM 17307 / VKM B-2377 / 273-4).